We begin with the raw amino-acid sequence, 282 residues long: Urease accessory protein UreD (282 aa).

It belongs to the UreD family. In terms of assembly, ureD, UreF and UreG form a complex that acts as a GTP-hydrolysis-dependent molecular chaperone, activating the urease apoprotein by helping to assemble the nickel containing metallocenter of UreC. The UreE protein probably delivers the nickel.

The protein localises to the cytoplasm. Required for maturation of urease via the functional incorporation of the urease nickel metallocenter. The sequence is that of Urease accessory protein UreD from Methylobacterium sp. (strain 4-46).